The primary structure comprises 196 residues: Probable malonic semialdehyde reductase RutE (196 aa).

The protein belongs to the nitroreductase family. HadB/RutE subfamily. The cofactor is FMN.

The enzyme catalyses 3-hydroxypropanoate + NADP(+) = 3-oxopropanoate + NADPH + H(+). Its function is as follows. May reduce toxic product malonic semialdehyde to 3-hydroxypropionic acid, which is excreted. In Escherichia coli O7:K1 (strain IAI39 / ExPEC), this protein is Probable malonic semialdehyde reductase RutE.